We begin with the raw amino-acid sequence, 374 residues long: UPF0754 membrane protein SA1664 (374 aa).

2 consecutive transmembrane segments (helical) span residues 4 to 24 (LFII…TNVI) and 354 to 374 (SLGF…AIFV).

The protein belongs to the UPF0754 family.

The protein localises to the cell membrane. The protein is UPF0754 membrane protein SA1664 of Staphylococcus aureus (strain N315).